Reading from the N-terminus, the 323-residue chain is Beta-ketoacyl-[acyl-carrier-protein] synthase III (323 aa).

Active-site residues include C112 and H250. The tract at residues 251-255 is ACP-binding; the sequence is QANQR. N280 is a catalytic residue.

Belongs to the thiolase-like superfamily. FabH family. As to quaternary structure, homodimer.

It localises to the cytoplasm. It catalyses the reaction malonyl-[ACP] + acetyl-CoA + H(+) = 3-oxobutanoyl-[ACP] + CO2 + CoA. The protein operates within lipid metabolism; fatty acid biosynthesis. In terms of biological role, catalyzes the condensation reaction of fatty acid synthesis by the addition to an acyl acceptor of two carbons from malonyl-ACP. Catalyzes the first condensation reaction which initiates fatty acid synthesis and may therefore play a role in governing the total rate of fatty acid production. Possesses both acetoacetyl-ACP synthase and acetyl transacylase activities. Its substrate specificity determines the biosynthesis of branched-chain and/or straight-chain of fatty acids. In Oenococcus oeni (strain ATCC BAA-331 / PSU-1), this protein is Beta-ketoacyl-[acyl-carrier-protein] synthase III.